Consider the following 167-residue polypeptide: SsrA-binding protein (167 aa).

The disordered stretch occupies residues 139–167; the sequence is QAHDKRHAEKEREWQRDKQRIMRAHNRNA. The span at 144-158 shows a compositional bias: basic and acidic residues; it reads RHAEKEREWQRDKQR.

This sequence belongs to the SmpB family.

Its subcellular location is the cytoplasm. Required for rescue of stalled ribosomes mediated by trans-translation. Binds to transfer-messenger RNA (tmRNA), required for stable association of tmRNA with ribosomes. tmRNA and SmpB together mimic tRNA shape, replacing the anticodon stem-loop with SmpB. tmRNA is encoded by the ssrA gene; the 2 termini fold to resemble tRNA(Ala) and it encodes a 'tag peptide', a short internal open reading frame. During trans-translation Ala-aminoacylated tmRNA acts like a tRNA, entering the A-site of stalled ribosomes, displacing the stalled mRNA. The ribosome then switches to translate the ORF on the tmRNA; the nascent peptide is terminated with the 'tag peptide' encoded by the tmRNA and targeted for degradation. The ribosome is freed to recommence translation, which seems to be the essential function of trans-translation. This is SsrA-binding protein from Xylella fastidiosa (strain M12).